A 220-amino-acid polypeptide reads, in one-letter code: Vesicle-associated membrane protein 7 (220 aa).

A2 carries the post-translational modification N-acetylalanine. Topologically, residues 2-188 (AILFAVVARG…ARAMCMKNLK (187 aa)) are cytoplasmic. The Longin domain occupies 7-110 (VVARGTTILA…AMNSEFSSVL (104 aa)). The v-SNARE coiled-coil homology domain maps to 125 to 185 (KVMETQAQVD…RNLARAMCMK (61 aa)). S167 and S168 each carry phosphoserine. Residues 189-209 (LTIIIIIISVVFIYIIVSPLC) form a helical; Anchor for type IV membrane protein membrane-spanning segment. Over 210-220 (GGFTWPNCVKK) the chain is Vesicular.

Belongs to the synaptobrevin family. In terms of assembly, component of the SNARE complex composed of STX4, SNAP23 and VAMP7 that binds SYT7 during lysosomal exocytosis. Component of the SNARE complex composed of STX7, STX8, VAMP7 and VTI1B that is required for heterotypic fusion of late endosomes with lysosomes. May interact with STX17. Interacts with PICALM. Interacts with RAB21.

Its subcellular location is the cytoplasmic vesicle. The protein localises to the secretory vesicle membrane. It is found in the golgi apparatus. The protein resides in the trans-Golgi network membrane. It localises to the late endosome membrane. Its subcellular location is the lysosome membrane. The protein localises to the endoplasmic reticulum membrane. It is found in the phagosome membrane. The protein resides in the synapse. It localises to the synaptosome. Functionally, involved in the targeting and/or fusion of transport vesicles to their target membrane during transport of proteins from the early endosome to the lysosome. Required for heterotypic fusion of late endosomes with lysosomes and homotypic lysosomal fusion. Required for calcium regulated lysosomal exocytosis. Involved in the export of chylomicrons from the endoplasmic reticulum to the cis Golgi. Required for exocytosis of mediators during eosinophil and neutrophil degranulation, and target cell killing by natural killer cells. Required for focal exocytosis of late endocytic vesicles during phagosome formation. In Bos taurus (Bovine), this protein is Vesicle-associated membrane protein 7 (VAMP7).